The primary structure comprises 788 residues: Endonuclease MutS2 (788 aa).

332-339 lines the ATP pocket; it reads GPNTGGKT. The 76-residue stretch at 713–788 folds into the Smr domain; that stretch reads VDLRGMDAEE…GTGVTVVELK (76 aa).

It belongs to the DNA mismatch repair MutS family. MutS2 subfamily. In terms of assembly, homodimer. Binds to stalled ribosomes, contacting rRNA.

Functionally, endonuclease that is involved in the suppression of homologous recombination and thus may have a key role in the control of bacterial genetic diversity. Its function is as follows. Acts as a ribosome collision sensor, splitting the ribosome into its 2 subunits. Detects stalled/collided 70S ribosomes which it binds and splits by an ATP-hydrolysis driven conformational change. Acts upstream of the ribosome quality control system (RQC), a ribosome-associated complex that mediates the extraction of incompletely synthesized nascent chains from stalled ribosomes and their subsequent degradation. Probably generates substrates for RQC. The protein is Endonuclease MutS2 of Clostridium botulinum (strain Okra / Type B1).